A 295-amino-acid polypeptide reads, in one-letter code: Ethanolamine ammonia-lyase small subunit (295 aa).

The adenosylcob(III)alamin site is built by Val-207, Glu-228, and Cys-258.

The protein belongs to the EutC family. As to quaternary structure, the basic unit is a heterodimer which dimerizes to form tetramers. The heterotetramers trimerize; 6 large subunits form a core ring with 6 small subunits projecting outwards. It depends on adenosylcob(III)alamin as a cofactor.

Its subcellular location is the bacterial microcompartment. It carries out the reaction ethanolamine = acetaldehyde + NH4(+). It functions in the pathway amine and polyamine degradation; ethanolamine degradation. In terms of biological role, catalyzes the deamination of various vicinal amino-alcohols to oxo compounds. Allows this organism to utilize ethanolamine as the sole source of nitrogen and carbon in the presence of external vitamin B12. The protein is Ethanolamine ammonia-lyase small subunit of Escherichia coli O7:K1 (strain IAI39 / ExPEC).